A 1075-amino-acid polypeptide reads, in one-letter code: Ras-associating and dilute domain-containing protein (1075 aa).

The Ras-associating domain maps to 61–164 (APGVLKVFGD…RRFELRKRSD (104 aa)). The tract at residues 183–237 (QARRLQRSRAKGTPTPALGDARSSPPPRLRRTVSETSLSPVNALPAAAQGPEEPG) is disordered. Residues serine 206, serine 216, serine 219, and serine 221 each carry the phosphoserine modification. Residues 225–234 (ALPAAAQGPE) are compositionally biased toward low complexity. The region spanning 314–389 (RLVLEPIPGA…RLCGAALGAR (76 aa)) is the FHA domain. Serine 393 is modified (phosphoserine). The Dilute domain occupies 497–764 (ADLVPDLQPI…QDSPEAFRSE (268 aa)). The tract at residues 872–967 (RGAPWAQAPP…PPAPSSRSSS (96 aa)) is disordered. Residue serine 890 is modified to Phosphoserine. The segment covering 950-967 (SAALAEESPPAPSSRSSS) has biased composition (low complexity). Positions 976 to 1061 (TVELERGPSG…KMRFLVAKSD (86 aa)) constitute a PDZ domain.

It belongs to the RADIL family. In terms of assembly, interacts with RAP1A; in a GTP-dependent manner. Does not interact with members of the Ras family. Interacts (via PDZ domain) with KIF14; is recruited to the microtubule network restricting its interaction with activated RAP1A.

Downstream effector of Rap required for cell adhesion and migration of neural crest precursors during development. The protein is Ras-associating and dilute domain-containing protein (RADIL) of Homo sapiens (Human).